The primary structure comprises 913 residues: Valine--tRNA ligase (913 aa).

The short motif at Pro48 to His58 is the 'HIGH' region element. Positions Lys541–Ser545 match the 'KMSKS' region motif. Lys544 is a binding site for ATP. The stretch at Val839 to Val907 forms a coiled coil.

Belongs to the class-I aminoacyl-tRNA synthetase family. ValS type 1 subfamily. As to quaternary structure, monomer.

The protein localises to the cytoplasm. The enzyme catalyses tRNA(Val) + L-valine + ATP = L-valyl-tRNA(Val) + AMP + diphosphate. Catalyzes the attachment of valine to tRNA(Val). As ValRS can inadvertently accommodate and process structurally similar amino acids such as threonine, to avoid such errors, it has a 'posttransfer' editing activity that hydrolyzes mischarged Thr-tRNA(Val) in a tRNA-dependent manner. This is Valine--tRNA ligase from Thermosynechococcus vestitus (strain NIES-2133 / IAM M-273 / BP-1).